The sequence spans 515 residues: Forkhead box protein H1 (515 aa).

The tract at residues 55 to 103 (YREGGTWSPDRGSMHGLSPGTQEGSCTQAEGTKDSLGGDETLSRKSKKK) is disordered. Residues 73–84 (PGTQEGSCTQAE) are compositionally biased toward polar residues. A DNA-binding region (fork-head) is located at residues 110–206 (KPPYSYLAMI…MKLQNTALTR (97 aa)). A disordered region spans residues 307–399 (YPQSKPTRNG…EPPKKMPLLS (93 aa)). The span at 322-339 (SASHSTYSSSSSSISTIS) shows a compositional bias: low complexity. The span at 375–388 (STPSSDTDAGNYSP) shows a compositional bias: polar residues. Residues 377–503 (PSSDTDAGNY…PSFLGQCLGS (127 aa)) form an SMAD-interaction domain (SID) region. The Fast/FoxH1 motif 1 (FM1) motif lies at 402 to 406 (LPTSY). The Fast/FoxH1 motif 2 (FM2) signature appears at 412–418 (PNVVAPP). Positions 467–488 (LDNMLKTVPPNKSVFDVLTSHP) match the SMAD-interaction motif (SIM) motif.

ARF1 contains 2 smad2s, 1 smad4 and 1 foxh1/fast-1 protein. Interaction with smad4 is most likely indirect through interaction with the MH2 domain of smad2. Binds to the MH2 domain of smad3, which can incorporate into the ARF1 complex. The ARF1 and ARF2 complexes are activated by distinct TGF-beta family members; formation of ARF1 is promoted by activin. Interacts (via Fork-head domain) with gtf2ird1/wbscr11 (via repeats 4-5).

The protein localises to the nucleus. Functionally, transcriptional activator. Recognizes and binds to the DNA sequence 5'-TGT[GT][GT]ATT-3'. Upon TGF-beta induction, forms a transcriptionally active complex with smad2 and smad4 called activin-responsive factor 1 (ARF1), which binds a site on the mix-B/mix.2 promoter called the activin response element (ARE). Binds to activated smads and the ARE with much lower affinity than fast3. Necessary for the first steps in mesoderm specification, directly inducing mesodermal genes. Acts with fast3 to control the convergent extension movements of gastrulation. Binds to the proximal element (PE) of the gsc gene and cooperates with gtf2ird1/wbscr11 and SMAD proteins to regulate gsc transcription. In Xenopus tropicalis (Western clawed frog), this protein is Forkhead box protein H1.